A 735-amino-acid polypeptide reads, in one-letter code: Ion-translocating oxidoreductase complex subunit C (735 aa).

4Fe-4S ferredoxin-type domains lie at 368-397 (MGAPQEEKSCIRCSACADACPADLLPQQLY) and 407-436 (KATAHHIADCIECGACAWVCPSNIPLVQYF). The [4Fe-4S] cluster site is built by cysteine 377, cysteine 380, cysteine 383, cysteine 387, cysteine 416, cysteine 419, cysteine 422, and cysteine 426. The segment at 534 to 715 (QARAKQAAHP…AVDPRKAAVA (182 aa)) is disordered. Over residues 666–689 (QQAGSEPAEPAAPRKAAVEAAIAR) the composition is skewed to low complexity.

It belongs to the 4Fe4S bacterial-type ferredoxin family. RnfC subfamily. The complex is composed of six subunits: RsxA, RsxB, RsxC, RsxD, RsxE and RsxG. It depends on [4Fe-4S] cluster as a cofactor.

It localises to the cell inner membrane. Its function is as follows. Part of a membrane-bound complex that couples electron transfer with translocation of ions across the membrane. Required to maintain the reduced state of SoxR. This is Ion-translocating oxidoreductase complex subunit C from Salmonella paratyphi B (strain ATCC BAA-1250 / SPB7).